The sequence spans 545 residues: Cryptochrome-1 (545 aa).

The Photolyase/cryptochrome alpha/beta domain occupies Ile-3–Leu-140. Residues Arg-237, Ser-265, Ser-267, Gln-308, His-375, Asp-407–Asp-409, Cys-413, and Asn-416 contribute to the FAD site.

It belongs to the DNA photolyase class-1 family. As to quaternary structure, interacts with tim and per; promoted by light conditions. Requires FAD as cofactor.

It localises to the cytoplasm. It is found in the perinuclear region. Its subcellular location is the nucleus. In terms of biological role, blue light-dependent regulator that is the input of the circadian feedback loop. Has no photolyase activity for cyclobutane pyrimidine dimers or 6-4 photoproducts. Regulation of expression by light suggests a role in photoreception for locomotor activity rhythms. Functions, together with per, as a transcriptional repressor required for the oscillation of peripheral circadian clocks and for the correct specification of clock cells. Genes directly activated by the transcription factors Clock (Clk) and cycle (cyc) are repressed by cry. The chain is Cryptochrome-1 from Anopheles gambiae (African malaria mosquito).